A 313-amino-acid chain; its full sequence is Methionyl-tRNA formyltransferase (313 aa).

112-115 provides a ligand contact to (6S)-5,6,7,8-tetrahydrofolate; sequence SLLP.

This sequence belongs to the Fmt family.

It carries out the reaction L-methionyl-tRNA(fMet) + (6R)-10-formyltetrahydrofolate = N-formyl-L-methionyl-tRNA(fMet) + (6S)-5,6,7,8-tetrahydrofolate + H(+). Its function is as follows. Attaches a formyl group to the free amino group of methionyl-tRNA(fMet). The formyl group appears to play a dual role in the initiator identity of N-formylmethionyl-tRNA by promoting its recognition by IF2 and preventing the misappropriation of this tRNA by the elongation apparatus. The protein is Methionyl-tRNA formyltransferase of Roseiflexus castenholzii (strain DSM 13941 / HLO8).